An 838-amino-acid chain; its full sequence is MPQRHHQGHKRTPKQLALIIKRCLPMVLTGSGMLCTTANAEEYYFDPIMLETTKSGMQTTDLSRFSKKYAQLPGTYQVDIWLNKKKVSQKKITFTANAEQLLQPQFTVEQLRELGIKVDEIPALAEKDDDSVINSLEQIIPGTAAEFDFNHQQLNLSIPQIALYRDARGYVSPSRWDDGIPTLFTNYSFTGSDNRYRQGNRSQRQYLNMQNGANFGPWRLRNYSTWTRNDQTSSWNTISSYLQRDIKALKSQLLLGESATSGSIFSSYTFTGVQLASDDNMLPNSQRGFAPTVRGIANSSAIVTIRQNGYVIYQSNVSAGAFEINDLYPSSNSGDLEVTIEESDGTQRRFIQPYSSLPMMQRPGHLKYSATAGRYRADANSDSKEPEFAEATAIYGLNNTFTLYGGLLGSEDYYALGIGIGGTLGALGALSMDINRADTQFDNQHSFHGYQWRTQYIKDIPETNTNIAVSYYRYTNDGYFSFNEANTRNWDYNSRQKSEIQFNISQTIFDGVSLYASGSQQDYWGNNDKNRNISVGVSGQQWGVGYSLNYQYSRYTDQNNDRALSLNLSIPLERWLPRSRVSYQMTSQKDRPTQHEMRLDGSLLDDGRLSYSLEQSLDDDNNHNSSLNASYRSPYGTFSAGYSYGNDSSQYNYGVTGGVVIHPHGVTLSQYLGNAFALIDANGASGVRIQNYPGIATDPFGYAVVPYLTTYQENRLSVDTTQLPDNVDLEQTTQFVVPNRGAMVAARFNANIGYRVLVTVSDRNGKPLPFGALASNDDTGQQSIVDEGGILYLSGISSKSQSWTVRWGNQADQQCQFAFSTPDSEPTTSVLQGTAQCH.

A signal peptide spans 1-40; sequence MPQRHHQGHKRTPKQLALIIKRCLPMVLTGSGMLCTTANA. A disulfide bond links cysteine 815 and cysteine 837.

Belongs to the fimbrial export usher family.

It localises to the cell outer membrane. In terms of biological role, part of the yraHIJK fimbrial operon. Could contribute to adhesion to various surfaces in specific environmental niches. Increases adhesion to eukaryotic T24 bladder epithelial cells in the absence of fim operon. Probably involved in the export and assembly of fimbrial subunits across the outer membrane. This chain is Outer membrane usher protein YraJ (yraJ), found in Escherichia coli (strain K12).